We begin with the raw amino-acid sequence, 280 residues long: Orotidine 5'-phosphate decarboxylase (280 aa).

Residues Asp40, 62–64, 93–102, Tyr228, and Arg246 each bind substrate; these read KTH and DRKFVDIGNT. The active-site Proton donor is the Lys95.

It belongs to the OMP decarboxylase family.

It carries out the reaction orotidine 5'-phosphate + H(+) = UMP + CO2. It participates in pyrimidine metabolism; UMP biosynthesis via de novo pathway; UMP from orotate: step 2/2. In Solorina crocea, this protein is Orotidine 5'-phosphate decarboxylase (PYRG).